A 441-amino-acid chain; its full sequence is Mitochondrial distribution and morphology protein 12 (441 aa).

The 441-residue stretch at 1–441 (MSIDIDWERA…VYPSFWTFLV (441 aa)) folds into the SMP-LTD domain. Disordered regions lie at residues 68 to 89 (DFYE…PMRE) and 183 to 289 (RAVT…RMRE). 2 stretches are compositionally biased toward polar residues: residues 226-245 (SRPS…SVST) and 253-263 (PSQTLLANNPG).

Belongs to the MDM12 family. In terms of assembly, component of the ER-mitochondria encounter structure (ERMES) or MDM complex, composed of MMM1, MDM10, MDM12 and MDM34. An MMM1 homodimer associates with one molecule of MDM12 on each side in a pairwise head-to-tail manner, and the SMP-LTD domains of MMM1 and MDM12 generate a continuous hydrophobic tunnel for phospholipid trafficking.

The protein localises to the mitochondrion outer membrane. It is found in the endoplasmic reticulum membrane. Component of the ERMES/MDM complex, which serves as a molecular tether to connect the endoplasmic reticulum (ER) and mitochondria. Components of this complex are involved in the control of mitochondrial shape and protein biogenesis, and function in nonvesicular lipid trafficking between the ER and mitochondria. MDM12 is required for the interaction of the ER-resident membrane protein MMM1 and the outer mitochondrial membrane-resident beta-barrel protein MDM10. The MDM12-MMM1 subcomplex functions in the major beta-barrel assembly pathway that is responsible for biogenesis of all mitochondrial outer membrane beta-barrel proteins, and acts in a late step after the SAM complex. The MDM10-MDM12-MMM1 subcomplex further acts in the TOM40-specific pathway after the action of the MDM12-MMM1 complex. Essential for establishing and maintaining the structure of mitochondria and maintenance of mtDNA nucleoids. The sequence is that of Mitochondrial distribution and morphology protein 12 from Paracoccidioides lutzii (strain ATCC MYA-826 / Pb01) (Paracoccidioides brasiliensis).